A 60-amino-acid chain; its full sequence is MSALAPITGTLKKRIITDIVIGFSLGGVMASYWWWGFHKNVIDRREAFYADLAEKKKAEN.

The Mitochondrial matrix portion of the chain corresponds to 1–15 (MSALAPITGTLKKRI). The helical transmembrane segment at 16–38 (ITDIVIGFSLGGVMASYWWWGFH) threads the bilayer. At 39-57 (KNVIDRREAFYADLAEKKK) the chain is on the mitochondrial intermembrane side. The propeptide at 58–60 (AEN) is removed in mature form.

Belongs to the fungal cytochrome c oxidase subunit 7a family. In terms of assembly, component of the cytochrome c oxidase (complex IV, CIV), a multisubunit enzyme composed of a catalytic core of 3 subunits and several supernumerary subunits. The complex exists as a monomer or a dimer and forms supercomplexes (SCs) in the inner mitochondrial membrane with ubiquinol-cytochrome c oxidoreductase (cytochrome b-c1 complex, complex III, CIII).

The protein resides in the mitochondrion inner membrane. It participates in energy metabolism; oxidative phosphorylation. Component of the cytochrome c oxidase, the last enzyme in the mitochondrial electron transport chain which drives oxidative phosphorylation. The respiratory chain contains 3 multisubunit complexes succinate dehydrogenase (complex II, CII), ubiquinol-cytochrome c oxidoreductase (cytochrome b-c1 complex, complex III, CIII) and cytochrome c oxidase (complex IV, CIV), that cooperate to transfer electrons derived from NADH and succinate to molecular oxygen, creating an electrochemical gradient over the inner membrane that drives transmembrane transport and the ATP synthase. Cytochrome c oxidase is the component of the respiratory chain that catalyzes the reduction of oxygen to water. Electrons originating from reduced cytochrome c in the intermembrane space (IMS) are transferred via the dinuclear copper A center (CU(A)) of subunit 2 and heme A of subunit 1 to the active site in subunit 1, a binuclear center (BNC) formed by heme A3 and copper B (CU(B)). The BNC reduces molecular oxygen to 2 water molecules using 4 electrons from cytochrome c in the IMS and 4 protons from the mitochondrial matrix. In Candida glabrata (strain ATCC 2001 / BCRC 20586 / JCM 3761 / NBRC 0622 / NRRL Y-65 / CBS 138) (Yeast), this protein is Cytochrome c oxidase subunit 9, mitochondrial (COX9).